The sequence spans 86 residues: RNA-binding protein Hfq (86 aa).

The Sm domain occupies 9 to 69; it reads DRFLNILRTS…VSTIMPESFV (61 aa).

It belongs to the Hfq family. As to quaternary structure, homohexamer.

Its function is as follows. RNA chaperone that binds small regulatory RNA (sRNAs) and mRNAs to facilitate mRNA translational regulation in response to envelope stress, environmental stress and changes in metabolite concentrations. Also binds with high specificity to tRNAs. In Thermosipho melanesiensis (strain DSM 12029 / CIP 104789 / BI429), this protein is RNA-binding protein Hfq.